We begin with the raw amino-acid sequence, 509 residues long: Maturase K (509 aa).

It belongs to the intron maturase 2 family. MatK subfamily.

The protein resides in the plastid. It is found in the chloroplast. Usually encoded in the trnK tRNA gene intron. Probably assists in splicing its own and other chloroplast group II introns. This Stylosanthes hamata (Caribbean stylo) protein is Maturase K.